A 395-amino-acid polypeptide reads, in one-letter code: Pyridinium-3,5-bisthiocarboxylic acid mononucleotide nickel insertion protein (395 aa).

This sequence belongs to the LarC family.

The catalysed reaction is Ni(II)-pyridinium-3,5-bisthiocarboxylate mononucleotide = pyridinium-3,5-bisthiocarboxylate mononucleotide + Ni(2+). In terms of biological role, involved in the biosynthesis of a nickel-pincer cofactor ((SCS)Ni(II) pincer complex). Binds Ni(2+), and functions in nickel delivery to pyridinium-3,5-bisthiocarboxylic acid mononucleotide (P2TMN), to form the mature cofactor. Is thus probably required for the activation of nickel-pincer cofactor-dependent enzymes. The polypeptide is Pyridinium-3,5-bisthiocarboxylic acid mononucleotide nickel insertion protein (Staphylococcus epidermidis (strain ATCC 12228 / FDA PCI 1200)).